The following is a 247-amino-acid chain: Enolase-phosphatase E1 (247 aa).

Residues D12 and E14 each coordinate Mg(2+). Substrate-binding positions include 141 to 142 (SS) and K175. D200 provides a ligand contact to Mg(2+).

The protein belongs to the HAD-like hydrolase superfamily. MasA/MtnC family. Monomer. It depends on Mg(2+) as a cofactor.

The protein resides in the cytoplasm. Its subcellular location is the nucleus. The enzyme catalyses 5-methylsulfanyl-2,3-dioxopentyl phosphate + H2O = 1,2-dihydroxy-5-(methylsulfanyl)pent-1-en-3-one + phosphate. It functions in the pathway amino-acid biosynthesis; L-methionine biosynthesis via salvage pathway; L-methionine from S-methyl-5-thio-alpha-D-ribose 1-phosphate: step 3/6. It participates in amino-acid biosynthesis; L-methionine biosynthesis via salvage pathway; L-methionine from S-methyl-5-thio-alpha-D-ribose 1-phosphate: step 4/6. Its function is as follows. Bifunctional enzyme that catalyzes the enolization of 2,3-diketo-5-methylthiopentyl-1-phosphate (DK-MTP-1-P) into the intermediate 2-hydroxy-3-keto-5-methylthiopentenyl-1-phosphate (HK-MTPenyl-1-P), which is then dephosphorylated to form the acireductone 1,2-dihydroxy-3-keto-5-methylthiopentene (DHK-MTPene). The polypeptide is Enolase-phosphatase E1 (Drosophila willistoni (Fruit fly)).